Consider the following 296-residue polypeptide: ADP-dependent (S)-NAD(P)H-hydrate dehydratase (296 aa).

The 275-residue stretch at 18–292 folds into the YjeF C-terminal domain; it reads TALRFPHVFK…PAARWLRNRI (275 aa). Residues A53, G113, and H165 each coordinate (6S)-NADPHX. AMP contacts are provided by residues 202–206 and G231; that span reads KGHKT. D232 contributes to the (6S)-NADPHX binding site.

Belongs to the NnrD/CARKD family. Homotetramer. Mg(2+) is required as a cofactor.

It catalyses the reaction (6S)-NADHX + ADP = AMP + phosphate + NADH + H(+). The catalysed reaction is (6S)-NADPHX + ADP = AMP + phosphate + NADPH + H(+). Its function is as follows. Catalyzes the dehydration of the S-form of NAD(P)HX at the expense of ADP, which is converted to AMP. Together with NAD(P)HX epimerase, which catalyzes the epimerization of the S- and R-forms, the enzyme allows the repair of both epimers of NAD(P)HX, a damaged form of NAD(P)H that is a result of enzymatic or heat-dependent hydration. This Neisseria meningitidis serogroup B (strain ATCC BAA-335 / MC58) protein is ADP-dependent (S)-NAD(P)H-hydrate dehydratase.